The primary structure comprises 112 residues: Putative inner membrane protein YafU (112 aa).

Over 1–21 (MSSERDLVNFLGDFSMDVAKA) the chain is Cytoplasmic. The chain crosses the membrane as a helical span at residues 22-42 (VIAGGVATAIGSLASFACVSF). G43 is a topological domain (periplasmic). Residues 44–64 (FPVILVGGAILLTGIVCTVVL) traverse the membrane as a helical segment. Topologically, residues 65-112 (NEIDAQCHLSEKLKYAIRDGLKRQQELDKWKRENMTPFMYVLNTPPVI) are cytoplasmic.

The protein localises to the cell inner membrane. This chain is Putative inner membrane protein YafU (yafU), found in Escherichia coli (strain K12).